The primary structure comprises 365 residues: U-box domain-containing protein 56 (365 aa).

Positions 176–281 (YEEQRRRLEI…ELLRALEKGE (106 aa)) form a coiled coil. Positions 293–365 (EPPQCFICPI…AIKDWLQQHP (73 aa)) constitute a U-box domain.

The enzyme catalyses S-ubiquitinyl-[E2 ubiquitin-conjugating enzyme]-L-cysteine + [acceptor protein]-L-lysine = [E2 ubiquitin-conjugating enzyme]-L-cysteine + N(6)-ubiquitinyl-[acceptor protein]-L-lysine.. It participates in protein modification; protein ubiquitination. Functions as an E3 ubiquitin ligase. The chain is U-box domain-containing protein 56 (PUB56) from Arabidopsis thaliana (Mouse-ear cress).